The chain runs to 449 residues: Transcription factor AP-2 gamma (449 aa).

K10 is covalently cross-linked (Glycyl lysine isopeptide (Lys-Gly) (interchain with G-Cter in SUMO)). Residues 13-58 (EDCEDRHDSSSNGNPRIPHLSSPGQHLYSPAPPLSHTGVAEYQPPP) form a disordered region. The short motif at 59–64 (YFPPPY) is the PPxY motif element. The tract at residues 94–130 (AATGSQQQAWPGRQSQEGSSLASHHSRSASLIPHISG) is disordered. A compositionally biased stretch (polar residues) spans 95 to 111 (ATGSQQQAWPGRQSQEG). Residues 112 to 124 (SSLASHHSRSASL) are compositionally biased toward low complexity. Position 251 is a phosphoserine; by PKA (S251). The segment at 292–423 (RRKAAHVTLL…YIKEALIAID (132 aa)) is H-S-H (helix-span-helix), dimerization. The segment at 426–449 (YMNPGDQSPADSSKTMEKMEKHRK) is disordered. S433 bears the Phosphoserine mark. Basic and acidic residues predominate over residues 439 to 449 (KTMEKMEKHRK).

It belongs to the AP-2 family. Binds DNA as a dimer. Can form homodimers or heterodimers with other AP-2 family members. Interacts with WWOX. Interacts with UBE2I. Interacts with KCTD1; this interaction represses transcription activation. Interacts with CITED2 (via C-terminus); the interaction stimulates TFAP2B-transcriptional activity. Interacts with CITED4. Interacts with MTA1. In terms of processing, sumoylated on Lys-10; which inhibits transcriptional activity. Expressed in lung, ovary and testis. Expressed in most squamous epithelia. Also, detected in several exocrine glands including the prostate, the preputial and salivary glands, serous glands of the tongue and ocular harderian glands.

The protein localises to the nucleus. Functionally, sequence-specific DNA-binding transcription factor that interacts with cellular enhancer elements to regulate transcription of selected genes, and which plays a key role in early embryonic development. AP-2 factors bind to the consensus sequence 5'-GCCNNNGGC-3' and activate genes involved in a large spectrum of important biological functions. TFAP2C plays a key role in early embryonic development by regulating both inner cell mass (ICM) and trophectoderm differentiation. At the 8-cell stage, during morula development, controls expression of cell-polarity genes. Upon trophoblast commitment, binds to late trophectoderm genes in blastocysts together with CDX2, and later to extra-embryonic ectoderm genes together with SOX2. Binds to both closed and open chromatin with other transcription factors. This is Transcription factor AP-2 gamma from Mus musculus (Mouse).